The chain runs to 710 residues: Early transcription factor 82 kDa subunit (710 aa).

It belongs to the poxviridae VETF large subunit family. As to quaternary structure, heterodimer of a 70 kDa and a 82 kDa subunit. Part of the early transcription complex composed of ETF, RAP94/OPG109, and the DNA-directed RNA polymerase.

It is found in the virion. Its function is as follows. Acts with RNA polymerase to initiate transcription from early gene promoters. Is recruited by the RPO-associated protein of 94 kDa RAP94/OPG109 to form the early transcription complex, which also contains the core RNA polymerase. ETF heterodimer binds to early gene promoters. The polypeptide is Early transcription factor 82 kDa subunit (OPG133) (Homo sapiens (Human)).